Reading from the N-terminus, the 444-residue chain is Crh-like protein 3 (444 aa).

Positions 1–19 (MVGKSTLLSVLASASVAFA) are cleaved as a signal peptide. Cysteine 27 and cysteine 34 are joined by a disulfide. The GH16 domain maps to 57–271 (SLESCVPEPV…WAGGEIDWNS (215 aa)). The active-site Nucleophile is glutamate 157. Glutamate 161 functions as the Proton donor in the catalytic mechanism. Glutamate 161 contributes to the chitin binding site. Asparagine 187 and asparagine 228 each carry an N-linked (GlcNAc...) asparagine glycan. 2 residues coordinate chitin: tryptophan 248 and threonine 259. 4 N-linked (GlcNAc...) asparagine glycosylation sites follow: asparagine 315, asparagine 323, asparagine 336, and asparagine 371. A lipid anchor (GPI-anchor amidated serine) is attached at serine 415. Positions 416–444 (ADSLVANQERVLKGSLFAGIVAVVAMMAL) are cleaved as a propeptide — removed in mature form.

It belongs to the glycosyl hydrolase 16 family. CRH1 subfamily. As to quaternary structure, forms homodimers as well as heterodimers with other crh protein members crh1 and crh2. Dimerization may be necessary for the transglycosylation activity.

Its subcellular location is the cell membrane. It catalyses the reaction Random endo-hydrolysis of N-acetyl-beta-D-glucosaminide (1-&gt;4)-beta-linkages in chitin and chitodextrins.. Its function is as follows. Dual chitinase/transglycosylase that plays a role in cell wall architecture. Chitinase and transglycosylase activities are coupled. Required for the polysaccharide cross-linking at the septa and the cell wall. More specifically, transfers chitin to 1,6-beta-glucan in the cell wall. The sequence is that of Crh-like protein 3 from Botryotinia fuckeliana (strain B05.10) (Noble rot fungus).